Here is a 555-residue protein sequence, read N- to C-terminus: GPI-anchor transamidase component PIGS (555 aa).

Residues A2–R18 lie on the Cytoplasmic side of the membrane. Positions 15 and 18 each coordinate a cardiolipin. The chain crosses the membrane as a helical span at residues S19 to T39. Topologically, residues E40–Q517 are lumenal. N-linked (GlcNAc...) asparagine glycans are attached at residues N267 and N370. A helical transmembrane segment spans residues K518 to P532. Over I533 to D555 the chain is Cytoplasmic.

It belongs to the PIGS family. In terms of assembly, heteropentamer. Part of the GPI-anchor transamidase complex, consisting of PIGK, PIGT, PIGS, PIGU and GAA1.

It is found in the endoplasmic reticulum membrane. Its pathway is glycolipid biosynthesis; glycosylphosphatidylinositol-anchor biosynthesis. Component of the glycosylphosphatidylinositol-anchor (GPI-anchor) transamidase (GPI-T) complex that catalyzes the formation of the linkage between a proprotein and a GPI-anchor and participates in GPI anchored protein biosynthesis. The protein is GPI-anchor transamidase component PIGS of Mus musculus (Mouse).